Consider the following 301-residue polypeptide: GTPase Era (301 aa).

Residues 7–175 (YCGFIAIVGR…AGIVRKHLPE (169 aa)) form the Era-type G domain. Residues 15-22 (GRPNVGKS) form a G1 region. 15–22 (GRPNVGKS) contacts GTP. The G2 stretch occupies residues 41 to 45 (QTTRH). Residues 62–65 (DTPG) are G3. GTP contacts are provided by residues 62–66 (DTPGL) and 124–127 (NKVD). The tract at residues 124–127 (NKVD) is G4. Residues 154–156 (ISA) are G5. The region spanning 206 to 283 (LGAELPYSVT…HLELWVKVKS (78 aa)) is the KH type-2 domain.

This sequence belongs to the TRAFAC class TrmE-Era-EngA-EngB-Septin-like GTPase superfamily. Era GTPase family. Monomer.

It localises to the cytoplasm. It is found in the cell inner membrane. An essential GTPase that binds both GDP and GTP, with rapid nucleotide exchange. Plays a role in 16S rRNA processing and 30S ribosomal subunit biogenesis and possibly also in cell cycle regulation and energy metabolism. This chain is GTPase Era, found in Salmonella heidelberg (strain SL476).